We begin with the raw amino-acid sequence, 450 residues long: Probable 1,4-beta-D-glucan cellobiohydrolase C (450 aa).

The first 19 residues, 1 to 19 (MKHLASSIALTLLLPAVQA), serve as a signal peptide directing secretion. The region spanning 20-55 (QQTVWGQCGGQGWSGPTNCVAGAACSTLNPYYAQCI) is the CBM1 domain. 2 disulfide bridges follow: Cys27–Cys44 and Cys38–Cys54. Residues 59–90 (TATSTTLSTTTTTQTTTKPTTTGPTTSAPTVT) form a thr-rich linker region. Positions 63 to 89 (TTLSTTTTTQTTTKPTTTGPTTSAPTV) are disordered. The segment at 91–450 (ASGNPFSGYQ…QLLTNANPSF (360 aa)) is catalytic. Residue Asp180 is part of the active site. 2 disulfide bridges follow: Cys181-Cys240 and Cys372-Cys419. The active-site Proton donor is Asp226. Asp405 (nucleophile) is an active-site residue. An N-linked (GlcNAc...) asparagine glycan is attached at Asn409.

The protein belongs to the glycosyl hydrolase 6 (cellulase B) family.

It is found in the secreted. It carries out the reaction Hydrolysis of (1-&gt;4)-beta-D-glucosidic linkages in cellulose and cellotetraose, releasing cellobiose from the non-reducing ends of the chains.. The biological conversion of cellulose to glucose generally requires three types of hydrolytic enzymes: (1) Endoglucanases which cut internal beta-1,4-glucosidic bonds; (2) Exocellobiohydrolases that cut the disaccharide cellobiose from the non-reducing end of the cellulose polymer chain; (3) Beta-1,4-glucosidases which hydrolyze the cellobiose and other short cello-oligosaccharides to glucose. This Neosartorya fischeri (strain ATCC 1020 / DSM 3700 / CBS 544.65 / FGSC A1164 / JCM 1740 / NRRL 181 / WB 181) (Aspergillus fischerianus) protein is Probable 1,4-beta-D-glucan cellobiohydrolase C (cbhC).